Reading from the N-terminus, the 556-residue chain is Potassium-transporting ATPase potassium-binding subunit (556 aa).

A run of 12 helical transmembrane segments spans residues 3 to 23, 57 to 77, 129 to 149, 172 to 192, 247 to 267, 278 to 298, 319 to 339, 346 to 366, 371 to 391, 408 to 428, 486 to 506, and 516 to 536; these read AHGVLQFLLFLALVLALTPIL, AAYAVSLLIFHLLAVFGLYAL, GLTVHNFLSAAAGIAVAVALM, LGLLLPLCLVGALVLVGQGVP, LVNLIHMLAIFAIGAALTNTF, WALLGAMAALFLAGLGAAWWA, LGVAASMLFAVVTTVTSCGAV, LLPLAGMIPMVNMLLGEVVVG, GLYGMVVFALLTVFIAGLMVG, LAVIAILATPVAVLGIGGLAI, FVVMIPVLAIAGALAAKMAVP, and GWLFVVLLVGIVLVVGGLTYF.

Belongs to the KdpA family. The system is composed of three essential subunits: KdpA, KdpB and KdpC.

The protein resides in the cell inner membrane. In terms of biological role, part of the high-affinity ATP-driven potassium transport (or Kdp) system, which catalyzes the hydrolysis of ATP coupled with the electrogenic transport of potassium into the cytoplasm. This subunit binds the periplasmic potassium ions and delivers the ions to the membrane domain of KdpB through an intramembrane tunnel. The protein is Potassium-transporting ATPase potassium-binding subunit of Paramagnetospirillum magneticum (strain ATCC 700264 / AMB-1) (Magnetospirillum magneticum).